The following is a 64-amino-acid chain: Alpha-mammal toxin AnCra1 (64 aa).

The LCN-type CS-alpha/beta domain maps to lysine 2–asparagine 64. Intrachain disulfides connect cysteine 12-cysteine 63, cysteine 16-cysteine 36, cysteine 22-cysteine 46, and cysteine 26-cysteine 48.

It belongs to the long (4 C-C) scorpion toxin superfamily. Sodium channel inhibitor family. Alpha subfamily. Expressed by the venom gland.

Its subcellular location is the secreted. Its function is as follows. Alpha toxins bind voltage-independently at site-3 of sodium channels (Nav) and inhibit the inactivation of the activated channels, thereby blocking neuronal transmission. This toxin is active against mammals. The recombinant toxin selectively inhibits the fast inactivation of hNav1.7/SCN9A channel (EC(50)=136.7 nM). Is potent in inhibiting the fast inactivation of hNav1.7 and has little effect on the steady-state inactivation. In vivo, intravenous injection into mice induces muscle contraction, leading to severe paralysis and death. The protein is Alpha-mammal toxin AnCra1 of Androctonus crassicauda (Arabian fat-tailed scorpion).